The chain runs to 499 residues: Cysteine--tRNA ligase (499 aa).

Cys30 serves as a coordination point for Zn(2+). The short motif at 32 to 42 is the 'HIGH' region element; sequence PTVYDRAHLGN. Residues Cys221, His246, and Glu250 each coordinate Zn(2+). A 'KMSKS' region motif is present at residues 279–283; it reads KMSKS. Residue Lys282 coordinates ATP.

It belongs to the class-I aminoacyl-tRNA synthetase family. As to quaternary structure, monomer. Zn(2+) is required as a cofactor.

The protein resides in the cytoplasm. It carries out the reaction tRNA(Cys) + L-cysteine + ATP = L-cysteinyl-tRNA(Cys) + AMP + diphosphate. In Cereibacter sphaeroides (strain ATCC 17023 / DSM 158 / JCM 6121 / CCUG 31486 / LMG 2827 / NBRC 12203 / NCIMB 8253 / ATH 2.4.1.) (Rhodobacter sphaeroides), this protein is Cysteine--tRNA ligase.